The following is a 47-amino-acid chain: MIQPQTHLNVADNSGARELMCIRILGASNRRYAYIGDIVVAVIKQAV.

This sequence belongs to the universal ribosomal protein uL14 family. In terms of assembly, part of the 50S ribosomal subunit.

It localises to the plastid. It is found in the chloroplast. In terms of biological role, binds to 23S rRNA. The polypeptide is Large ribosomal subunit protein uL14c (rpl14) (Vigna unguiculata (Cowpea)).